We begin with the raw amino-acid sequence, 238 residues long: MTDQTTTRRVLLKLSGESFGGGQMGVDPDVVSALAREIAEAAKTVEVAIVVGGGNFFRGAQLSQRGMDRGRADYMGMLGTVMNALALQDFLEQAGAATRVQSAISMTQVAEPYIPRRAVRHLEKGRIVIFGAGAGLPYFSTDTVAAQRALEIQAVEVLVAKNGVDGVYTGDPRTDPSATLLDTVTYQDALQRGLKVVDSTAFSLCMDNDMKMVVFGMEPGGNVTRAIRGERIGTIVSN.

13-16 (KLSG) contacts ATP. Gly-53 is a binding site for UMP. Residues Gly-54 and Arg-58 each contribute to the ATP site. UMP contacts are provided by residues Asp-73 and 134-141 (AGLPYFST). Positions 162, 168, and 171 each coordinate ATP.

This sequence belongs to the UMP kinase family. As to quaternary structure, homohexamer.

It is found in the cytoplasm. The enzyme catalyses UMP + ATP = UDP + ADP. The protein operates within pyrimidine metabolism; CTP biosynthesis via de novo pathway; UDP from UMP (UMPK route): step 1/1. Its activity is regulated as follows. Inhibited by UTP. Catalyzes the reversible phosphorylation of UMP to UDP. This chain is Uridylate kinase, found in Clavibacter michiganensis subsp. michiganensis (strain NCPPB 382).